A 125-amino-acid chain; its full sequence is Holo-[acyl-carrier-protein] synthase (125 aa).

Residues Asp8 and Glu55 each coordinate Mg(2+).

This sequence belongs to the P-Pant transferase superfamily. AcpS family. Mg(2+) serves as cofactor.

Its subcellular location is the cytoplasm. The enzyme catalyses apo-[ACP] + CoA = holo-[ACP] + adenosine 3',5'-bisphosphate + H(+). In terms of biological role, transfers the 4'-phosphopantetheine moiety from coenzyme A to a Ser of acyl-carrier-protein. The sequence is that of Holo-[acyl-carrier-protein] synthase from Treponema pallidum (strain Nichols).